The sequence spans 754 residues: Cytosolic neutral trehalase (754 aa).

Over residues 1 to 10 the composition is skewed to polar residues; it reads MDGKVNNNPP. Disordered regions lie at residues 1–47 and 54–73; these read MDGK…LSKN and TFSV…YTSP. Ca(2+) is bound by residues aspartate 117, aspartate 119, asparagine 121, glutamine 123, and aspartate 128. Residues arginine 305, 312–313, asparagine 349, 358–360, glutamate 427, arginine 476, and glycine 479 each bind substrate; these read WD and RSQ. Catalysis depends on proton donor/acceptor residues aspartate 481 and glutamate 676.

Belongs to the glycosyl hydrolase 37 family. Requires Ca(2+) as cofactor.

Its subcellular location is the cytoplasm. The enzyme catalyses alpha,alpha-trehalose + H2O = alpha-D-glucose + beta-D-glucose. Its pathway is carbohydrate degradation. In terms of biological role, hydrolyzes intracellular trehalose to glucose. The disaccharide trehalose serves as a storage molecule for energy and carbohydrates that is mobilized during nutrient stress. The chain is Cytosolic neutral trehalase from Kluyveromyces lactis (strain ATCC 8585 / CBS 2359 / DSM 70799 / NBRC 1267 / NRRL Y-1140 / WM37) (Yeast).